The sequence spans 505 residues: MGSCCSSQDGDGNGKATAGSTVDSHELSQSVKGKIKQPEPKPKPPPQVPPAQDVKYPIYVGKYDYDSRTDDDLSFKKGDLMYIISTDEGDWWFARSKDTAGKEGYIPSNYVAEYKSLDAEEWFLGKIKRVEAEKMLNQSFNQVGSFLIRDSETTPGDFSLSVKDQDRVRHYRVRRLEDGSLFVTRRSTFQILHELVDHYKIETDGLCCKLLYPCLQAEKPQTAGLLRQANEEWEIEKTQIKLLRRLGAGQFGEVWEGLWNGTTSVAVKTLKPGTMSVEEFLQEASIMKRLRHPKLIQLYAVCTKEEPIYIVTELMKYGSLLEYLRGEDGVLKIEQLVDVAAQVASGMSYLEQQNYIHRDLAARNILVGEHGICKVADFGLARVIDEEIYEAHTGAKFPIKWTAPEAAMYNRFTIKSDVWSFGVVLYEIITYGRFPYPGMTNPEVLEKIQQNYRMPCPANCPKQFHDIMLDCWREDPASRPTFETLQWQLEEFFNSEGYRDPDAIH.

Composition is skewed to polar residues over residues 1–10 (MGSCCSSQDG) and 18–31 (AGSTVDSHELSQSV). The interval 1–53 (MGSCCSSQDGDGNGKATAGSTVDSHELSQSVKGKIKQPEPKPKPPPQVPPAQD) is disordered. The SH3 domain maps to 54 to 116 (VKYPIYVGKY…PSNYVAEYKS (63 aa)). Residues 122 to 214 (WFLGKIKRVE…GLCCKLLYPC (93 aa)) enclose the SH2 domain. The Protein kinase domain occupies 240–493 (IKLLRRLGAG…TLQWQLEEFF (254 aa)). Residues 246 to 254 (LGAGQFGEV) and K268 each bind ATP. D359 serves as the catalytic Proton acceptor.

Belongs to the protein kinase superfamily. Tyr protein kinase family. SRC subfamily.

Its subcellular location is the cytoplasm. The catalysed reaction is L-tyrosyl-[protein] + ATP = O-phospho-L-tyrosyl-[protein] + ADP + H(+). The chain is Tyrosine-protein kinase isoform SRK1 (SRK1) from Spongilla lacustris (Freshwater sponge).